The chain runs to 678 residues: uncharacterized protein (678 aa).

Residues 1 to 26 (MGVHFDDNANTTWEATDPGVSSDCDG) form a disordered region. 9 helical membrane-spanning segments follow: residues 119–139 (LLLL…LIYP), 245–265 (SFPC…GGCT), 317–337 (AAVV…YDSI), 340–360 (YWIN…PPLL), 371–391 (ELFS…YVVW), 405–425 (IAKV…NVTF), 443–463 (GALT…VIQA), 475–495 (YFKI…LPGL), and 519–539 (AYLF…RWDF).

It is found in the vacuole membrane. This is an uncharacterized protein from Saccharomyces cerevisiae (strain ATCC 204508 / S288c) (Baker's yeast).